Here is a 240-residue protein sequence, read N- to C-terminus: Fatty acid metabolism regulator protein (240 aa).

An HTH gntR-type domain is found at 6–74; it reads KGPASFAEKY…HGKPTRVNNF (69 aa). A DNA-binding region (H-T-H motif) is located at residues 34 to 53; that stretch reads ERELSELIGVTRTTLREVLQ.

Homodimer.

It localises to the cytoplasm. Its function is as follows. Multifunctional regulator of fatty acid metabolism. This Shewanella oneidensis (strain ATCC 700550 / JCM 31522 / CIP 106686 / LMG 19005 / NCIMB 14063 / MR-1) protein is Fatty acid metabolism regulator protein.